We begin with the raw amino-acid sequence, 467 residues long: E3 ubiquitin-protein ligase TRIM11 (467 aa).

The segment at 16-57 adopts an RING-type zinc-finger fold; it reads CAICLDYFTDPVMTDCGHNFCRECIRRCWGQPEGPYACPECR. Position 85 is a phosphoserine (S85). The B box-type zinc-finger motif lies at 87–127; that stretch reads VPQGVCAAHREPLTTFCGDDLSLLCPTCERSEHWAHRVRPL. Residues C92, H95, C114, and H119 each contribute to the Zn(2+) site. Positions 127-207 form a coiled coil; that stretch reads LQEAADDLKG…KLEEEELEVL (81 aa). Residues 267–460 form the B30.2/SPRY domain; sequence ELRTVCRVPG…MTICRLIGVS (194 aa). Positions 304 to 313 are enriched in basic and acidic residues; it reads DRRSVQRGEQ. The disordered stretch occupies residues 304 to 325; that stretch reads DRRSVQRGEQRQALPDSPERFD.

It belongs to the TRIM/RBCC family. As to quaternary structure, binds cytoplasmic tail of integrin alpha-1. Interacts with the HN peptide. Interacts with PHOX2B. Interacts (when autoubiquitinated) with SQSTM1/p62; promoting AIM2 recruitment to autophagosomes. Interacts with AIM2; promoting its autophagy-dependent degradation. Autoubiquitinated upon DNA stimulation; autoubiquitination promotes interaction with SQSTM1/p62 and recruitment of AIM2 to autophagosomes.

The protein resides in the cytoplasm. It is found in the nucleus. The catalysed reaction is S-ubiquitinyl-[E2 ubiquitin-conjugating enzyme]-L-cysteine + [acceptor protein]-L-lysine = [E2 ubiquitin-conjugating enzyme]-L-cysteine + N(6)-ubiquitinyl-[acceptor protein]-L-lysine.. Its pathway is protein modification; protein ubiquitination. Its function is as follows. E3 ubiquitin-protein ligase that promotes the degradation of insoluble ubiquitinated proteins, including insoluble PAX6, poly-Gln repeat expanded HTT and poly-Ala repeat expanded ARX. Mediates PAX6 ubiquitination leading to proteasomal degradation, thereby modulating cortical neurogenesis. May also inhibit PAX6 transcriptional activity, possibly in part by preventing the binding of PAX6 to its consensus sequences. May contribute to the regulation of the intracellular level of HN (humanin) or HN-containing proteins through the proteasomal degradation pathway. Mediates MED15 ubiquitination leading to proteasomal degradation. May contribute to the innate restriction of retroviruses. Upon overexpression, reduces HIV-1 and murine leukemia virus infectivity, by suppressing viral gene expression. Antiviral activity depends on a functional E3 ubiquitin-protein ligase domain. May regulate TRIM5 turnover via the proteasome pathway, thus counteracting the TRIM5-mediated cross-species restriction of retroviral infection at early stages of the retroviral life cycle. Acts as an inhibitor of the AIM2 inflammasome by promoting autophagy-dependent degradation of AIM2. Mechanistically, undergoes autoubiquitination upon DNA stimulation, promoting interaction with AIM2 and SQSTM1/p62, leading to AIM2 recruitment to autophagosomes. The sequence is that of E3 ubiquitin-protein ligase TRIM11 (Trim11) from Rattus norvegicus (Rat).